The following is a 636-amino-acid chain: Chaperone protein DnaK (636 aa).

Thr196 carries the phosphothreonine; by autocatalysis modification. The disordered stretch occupies residues 591 to 636 (LAEAMYKSSSQPGAQEAPPTDGQPKPDEKGKDNVVDAEFVDVDDKK). Residues 614-624 (PKPDEKGKDNV) show a composition bias toward basic and acidic residues.

Belongs to the heat shock protein 70 family.

In terms of biological role, acts as a chaperone. This chain is Chaperone protein DnaK, found in Solibacter usitatus (strain Ellin6076).